Here is a 47-residue protein sequence, read N- to C-terminus: Laccase-2d (47 aa).

A Plastocyanin-like domain is found at 2-47 (TGPVADLHIINKDLSPDGFQRPTVVAGGGRDVVSIGRAGDNVTIRF).

It belongs to the multicopper oxidase family. As to quaternary structure, homodimer. Cu cation is required as a cofactor. In terms of processing, N-glycosylated; contains 17% carbohydrates.

It localises to the secreted. It carries out the reaction 4 hydroquinone + O2 = 4 benzosemiquinone + 2 H2O. Inhibited by sodium azide, SDS and mercaptoethanol, but not by 4-hexyl resocinol, L-cysteine and dithiothreitol. Activity is inhibited by the heavy metal ions Cr, W, Sn, Ag(+) and Hg(2+), but not by Pb(2+), Fe(3+), Ni(2+), Li(2+), Co(2+) or Cd(2+). Functionally, lignin degradation and detoxification of lignin-derived products. Has highest activity towards ABTS, also active towards ferulic acid and guaiacol, but is not active towards tyrosine, vanillic acid, 2,5-dimethyl aniline, p-anisidine or violuric acid. The protein is Laccase-2d of Cerrena unicolor (Canker rot fungus).